A 92-amino-acid chain; its full sequence is Small ribosomal subunit protein uS19 (92 aa).

It belongs to the universal ribosomal protein uS19 family.

Its function is as follows. Protein S19 forms a complex with S13 that binds strongly to the 16S ribosomal RNA. In Aliivibrio salmonicida (strain LFI1238) (Vibrio salmonicida (strain LFI1238)), this protein is Small ribosomal subunit protein uS19.